The following is a 309-amino-acid chain: tRNA dimethylallyltransferase (309 aa).

An ATP-binding site is contributed by 9 to 16; that stretch reads GPTAVGKT. 11–16 contributes to the substrate binding site; that stretch reads TAVGKT. Residues 34 to 37 form an interaction with substrate tRNA region; that stretch reads DSMQ.

It belongs to the IPP transferase family. In terms of assembly, monomer. Mg(2+) serves as cofactor.

The catalysed reaction is adenosine(37) in tRNA + dimethylallyl diphosphate = N(6)-dimethylallyladenosine(37) in tRNA + diphosphate. In terms of biological role, catalyzes the transfer of a dimethylallyl group onto the adenine at position 37 in tRNAs that read codons beginning with uridine, leading to the formation of N6-(dimethylallyl)adenosine (i(6)A). The polypeptide is tRNA dimethylallyltransferase (Clostridium acetobutylicum (strain ATCC 824 / DSM 792 / JCM 1419 / IAM 19013 / LMG 5710 / NBRC 13948 / NRRL B-527 / VKM B-1787 / 2291 / W)).